The sequence spans 139 residues: NADPH-dependent 7-cyano-7-deazaguanine reductase (139 aa).

The active-site Thioimide intermediate is Cys-34. The Proton donor role is filled by Asp-41. Residues 56–58 and 75–76 contribute to the substrate site; these read IEL and HE.

It belongs to the GTP cyclohydrolase I family. QueF type 1 subfamily.

It is found in the cytoplasm. The catalysed reaction is 7-aminomethyl-7-carbaguanine + 2 NADP(+) = 7-cyano-7-deazaguanine + 2 NADPH + 3 H(+). The protein operates within tRNA modification; tRNA-queuosine biosynthesis. Its function is as follows. Catalyzes the NADPH-dependent reduction of 7-cyano-7-deazaguanine (preQ0) to 7-aminomethyl-7-deazaguanine (preQ1). This is NADPH-dependent 7-cyano-7-deazaguanine reductase from Nitrosomonas eutropha (strain DSM 101675 / C91 / Nm57).